A 503-amino-acid polypeptide reads, in one-letter code: Probable cytosol aminopeptidase (503 aa).

Mn(2+) is bound by residues Lys270 and Asp275. Lys282 is an active-site residue. 3 residues coordinate Mn(2+): Asp293, Asp352, and Glu354. The active site involves Arg356.

The protein belongs to the peptidase M17 family. Mn(2+) is required as a cofactor.

Its subcellular location is the cytoplasm. The catalysed reaction is Release of an N-terminal amino acid, Xaa-|-Yaa-, in which Xaa is preferably Leu, but may be other amino acids including Pro although not Arg or Lys, and Yaa may be Pro. Amino acid amides and methyl esters are also readily hydrolyzed, but rates on arylamides are exceedingly low.. It catalyses the reaction Release of an N-terminal amino acid, preferentially leucine, but not glutamic or aspartic acids.. Presumably involved in the processing and regular turnover of intracellular proteins. Catalyzes the removal of unsubstituted N-terminal amino acids from various peptides. The polypeptide is Probable cytosol aminopeptidase (Shigella boydii serotype 18 (strain CDC 3083-94 / BS512)).